The sequence spans 201 residues: Holliday junction branch migration complex subunit RuvA (201 aa).

The interval 1-63 (MIAYIKGTLN…EDAQILFGFQ (63 aa)) is domain I. Residues 64-142 (NRDEKYLFTK…SVFSITDEQQ (79 aa)) are domain II. The segment at 143–149 (KSSVSNV) is flexible linker. The tract at residues 150–201 (NNNEVYSEAMEALKALGYTDKEVKQVLPHLKKDNDALSVDEAIRKALALLAK) is domain III.

It belongs to the RuvA family. In terms of assembly, homotetramer. Forms an RuvA(8)-RuvB(12)-Holliday junction (HJ) complex. HJ DNA is sandwiched between 2 RuvA tetramers; dsDNA enters through RuvA and exits via RuvB. An RuvB hexamer assembles on each DNA strand where it exits the tetramer. Each RuvB hexamer is contacted by two RuvA subunits (via domain III) on 2 adjacent RuvB subunits; this complex drives branch migration. In the full resolvosome a probable DNA-RuvA(4)-RuvB(12)-RuvC(2) complex forms which resolves the HJ.

It localises to the cytoplasm. In terms of biological role, the RuvA-RuvB-RuvC complex processes Holliday junction (HJ) DNA during genetic recombination and DNA repair, while the RuvA-RuvB complex plays an important role in the rescue of blocked DNA replication forks via replication fork reversal (RFR). RuvA specifically binds to HJ cruciform DNA, conferring on it an open structure. The RuvB hexamer acts as an ATP-dependent pump, pulling dsDNA into and through the RuvAB complex. HJ branch migration allows RuvC to scan DNA until it finds its consensus sequence, where it cleaves and resolves the cruciform DNA. The polypeptide is Holliday junction branch migration complex subunit RuvA (Oceanobacillus iheyensis (strain DSM 14371 / CIP 107618 / JCM 11309 / KCTC 3954 / HTE831)).